A 49-amino-acid chain; its full sequence is Large ribosomal subunit protein bL33B (49 aa).

Belongs to the bacterial ribosomal protein bL33 family.

The protein is Large ribosomal subunit protein bL33B of Geobacillus kaustophilus (strain HTA426).